We begin with the raw amino-acid sequence, 382 residues long: Galactokinase (382 aa).

34 to 37 (EHTD) lines the substrate pocket. 124 to 130 (GAGLSSS) lines the ATP pocket. Residues serine 130 and glutamate 162 each contribute to the Mg(2+) site. The active-site Proton acceptor is the aspartate 174. Position 223 (tyrosine 223) interacts with substrate.

This sequence belongs to the GHMP kinase family. GalK subfamily.

The protein resides in the cytoplasm. It carries out the reaction alpha-D-galactose + ATP = alpha-D-galactose 1-phosphate + ADP + H(+). It participates in carbohydrate metabolism; galactose metabolism. Catalyzes the transfer of the gamma-phosphate of ATP to D-galactose to form alpha-D-galactose-1-phosphate (Gal-1-P). The polypeptide is Galactokinase (Salmonella paratyphi C (strain RKS4594)).